The chain runs to 140 residues: Phosphoribosyl-AMP cyclohydrolase (140 aa).

Residue Asp84 coordinates Mg(2+). A Zn(2+)-binding site is contributed by Cys85. Positions 86 and 88 each coordinate Mg(2+). Zn(2+) is bound by residues Cys101 and Cys108.

Belongs to the PRA-CH family. As to quaternary structure, homodimer. The cofactor is Mg(2+). Zn(2+) serves as cofactor.

The protein localises to the cytoplasm. The enzyme catalyses 1-(5-phospho-beta-D-ribosyl)-5'-AMP + H2O = 1-(5-phospho-beta-D-ribosyl)-5-[(5-phospho-beta-D-ribosylamino)methylideneamino]imidazole-4-carboxamide. It participates in amino-acid biosynthesis; L-histidine biosynthesis; L-histidine from 5-phospho-alpha-D-ribose 1-diphosphate: step 3/9. Catalyzes the hydrolysis of the adenine ring of phosphoribosyl-AMP. The polypeptide is Phosphoribosyl-AMP cyclohydrolase (Chloroherpeton thalassium (strain ATCC 35110 / GB-78)).